A 121-amino-acid chain; its full sequence is Large ribosomal subunit protein bL19 (121 aa).

The protein belongs to the bacterial ribosomal protein bL19 family.

Functionally, this protein is located at the 30S-50S ribosomal subunit interface and may play a role in the structure and function of the aminoacyl-tRNA binding site. The protein is Large ribosomal subunit protein bL19 of Acidothermus cellulolyticus (strain ATCC 43068 / DSM 8971 / 11B).